A 463-amino-acid polypeptide reads, in one-letter code: Histone acetyltransferase mst1 (463 aa).

In terms of domain architecture, Tudor-knot spans 22 to 74; the sequence is VYKSKVFAFKDGEYRKAEILMIQKRTRGVVYYVHYNDYNKRLDEWITIDNIDL. The disordered stretch occupies residues 76–145; the sequence is KGIEYPPPEK…GSNAGNESLP (70 aa). Residues 87–99 are compositionally biased toward basic residues; it reads KKAHGKGKSSKRP. Residues 111–121 show a composition bias toward low complexity; the sequence is PSKTEPSTPST. The region spanning 179–451 is the MYST-type HAT domain; the sequence is ARIRNINKIC…NGDLLADWQP (273 aa). The C2HC MYST-type zinc finger occupies 212–237; that stretch reads VYICSFCFCYYGSERQFQRHREKCTL. The ESA1-RPD3 motif signature appears at 262-283; sequence RTWCRNICLLSKLFLDHKMLYY. K279 bears the N6-acetyllysine; by autocatalysis mark. Residues 320 to 324 and 329 to 335 contribute to the acetyl-CoA site; these read ACILT and QRHGYGK. Catalysis depends on E355, which acts as the Proton donor/acceptor. Acetyl-CoA is bound at residue S359.

Belongs to the MYST (SAS/MOZ) family. Component of the NuA4 histone acetyltransferase complex. Interacts with arp4. Post-translationally, autoacetylation at Lys-279 is required for proper function.

The protein resides in the nucleus. The protein localises to the chromosome. It carries out the reaction L-lysyl-[histone] + acetyl-CoA = N(6)-acetyl-L-lysyl-[histone] + CoA + H(+). It catalyses the reaction L-lysyl-[protein] + acetyl-CoA = N(6)-acetyl-L-lysyl-[protein] + CoA + H(+). The catalysed reaction is 2-hydroxyisobutanoyl-CoA + L-lysyl-[protein] = N(6)-(2-hydroxyisobutanoyl)-L-lysyl-[protein] + CoA + H(+). The enzyme catalyses (2E)-butenoyl-CoA + L-lysyl-[protein] = N(6)-(2E)-butenoyl-L-lysyl-[protein] + CoA + H(+). Catalytic component of the NuA4 histone acetyltransferase (HAT) complex which is involved in epigenetic transcriptional activation of selected genes principally by acetylation of nucleosomal histones H4, H3, H2B, H2A and H2A variant H2A.Z. Acetylates histone H4 to form H4K5ac, H4K8ac, H4K12ac and H4K16ac, histone H3 to form H3K14ac, and histone H2A to form H2AK4ac and H2AK7ac. The NuA4 complex is involved in the DNA damage response and is required for chromosome segregation. The NuA4 complex plays a direct role in repair of DNA double-strand breaks (DSBs) through homologous recombination. Recruitment to promoters depends on H3K4me. Also acetylates non-histone proteins. In addition to protein acetyltransferase, can use different acyl-CoA substrates, such as 2-hydroxyisobutanoyl-CoA (2-hydroxyisobutyryl-CoA) or (2E)-butenoyl-CoA (crotonyl-CoA), and is able to mediate protein 2-hydroxyisobutyrylation and crotonylation, respectively. This chain is Histone acetyltransferase mst1, found in Schizosaccharomyces pombe (strain 972 / ATCC 24843) (Fission yeast).